Consider the following 156-residue polypeptide: Small ribosomal subunit protein uS7 (156 aa).

It belongs to the universal ribosomal protein uS7 family. Part of the 30S ribosomal subunit. Contacts proteins S9 and S11.

In terms of biological role, one of the primary rRNA binding proteins, it binds directly to 16S rRNA where it nucleates assembly of the head domain of the 30S subunit. Is located at the subunit interface close to the decoding center, probably blocks exit of the E-site tRNA. In Hyphomonas neptunium (strain ATCC 15444), this protein is Small ribosomal subunit protein uS7.